The following is a 502-amino-acid chain: Histidine--tRNA ligase (502 aa).

This sequence belongs to the class-II aminoacyl-tRNA synthetase family. Homodimer.

The protein resides in the cytoplasm. It catalyses the reaction tRNA(His) + L-histidine + ATP = L-histidyl-tRNA(His) + AMP + diphosphate + H(+). This chain is Histidine--tRNA ligase, found in Brucella abortus (strain S19).